The following is a 1006-amino-acid chain: UPF0182 protein Arth_2749 (1006 aa).

Transmembrane regions (helical) follow at residues 18 to 38 (GALT…IFFA), 64 to 84 (IIIF…AIRI), 115 to 135 (VVMI…AASQ), 168 to 188 (FLGF…IAGI), 211 to 231 (QIHL…NFWL), 260 to 280 (SILA…AVIG), and 287 to 307 (IGTA…PWVI). Disordered stretches follow at residues 490–519 (GAPE…FTGN), 896–923 (KAGD…GGTD), and 975–1006 (LGSE…SPSN). Basic and acidic residues predominate over residues 495–509 (SPHREQDRPAGKEGD). Composition is skewed to low complexity over residues 911-923 (AGGS…GGTD) and 979-1000 (GASP…AATP).

This sequence belongs to the UPF0182 family.

The protein localises to the cell membrane. The chain is UPF0182 protein Arth_2749 from Arthrobacter sp. (strain FB24).